Here is a 358-residue protein sequence, read N- to C-terminus: DNA polymerase IV (358 aa).

The UmuC domain occupies 4–185 (IIHIDMDCYF…LSLRKIPGVG (182 aa)). 2 residues coordinate Mg(2+): aspartate 8 and aspartate 103. Glutamate 104 is an active-site residue.

This sequence belongs to the DNA polymerase type-Y family. In terms of assembly, monomer. Mg(2+) serves as cofactor.

It localises to the cytoplasm. It carries out the reaction DNA(n) + a 2'-deoxyribonucleoside 5'-triphosphate = DNA(n+1) + diphosphate. Its function is as follows. Poorly processive, error-prone DNA polymerase involved in untargeted mutagenesis. Copies undamaged DNA at stalled replication forks, which arise in vivo from mismatched or misaligned primer ends. These misaligned primers can be extended by PolIV. Exhibits no 3'-5' exonuclease (proofreading) activity. May be involved in translesional synthesis, in conjunction with the beta clamp from PolIII. This Shewanella baltica (strain OS185) protein is DNA polymerase IV.